The sequence spans 136 residues: ATP synthase F(0) complex subunit C1, mitochondrial (136 aa).

A mitochondrion-targeting transit peptide spans 1 to 61 (MQTTGALLIS…REFQTSVVSR (61 aa)). The chain crosses the membrane as a helical span at residues 77–97 (VGVAGSGAGIGTVFGSLIIGY). At Lys104 the chain carries N6,N6,N6-trimethyllysine. The chain crosses the membrane as a helical span at residues 112–132 (ILGFALSEAMGLFCLMVAFLI).

It belongs to the ATPase C chain family. Homooctamer; the c-ring consists of eight c subunits forming a circle, and each subunit adopts a hairpin shape. Component of the ATP synthase complex composed at least of ATP5F1A/subunit alpha, ATP5F1B/subunit beta, ATP5MC1/subunit c (homooctomer), MT-ATP6/subunit a, MT-ATP8/subunit 8, ATP5ME/subunit e, ATP5MF/subunit f, ATP5MG/subunit g, ATP5MK/subunit k, ATP5MJ/subunit j, ATP5F1C/subunit gamma, ATP5F1D/subunit delta, ATP5F1E/subunit epsilon, ATP5PF/subunit F6, ATP5PB/subunit b, ATP5PD/subunit d, ATP5PO/subunit OSCP. ATP synthase complex consists of a soluble F(1) head domain (subunits alpha(3) and beta(3)) - the catalytic core - and a membrane F(0) domain - the membrane proton channel (subunits c, a, 8, e, f, g, k and j). These two domains are linked by a central stalk (subunits gamma, delta, and epsilon) rotating inside the F1 region and a stationary peripheral stalk (subunits F6, b, d, and OSCP). Interacts with TMEM70 (homooligomer form); this interaction facilitates the oligomer formation of subunit c/ATP5MC1 (c-ring) and the c-ring membrane insertion and also protects ATP5MC1 against intramitochondrial proteolysis. In terms of processing, trimethylated by ATPSCKMT at Lys-104. Methylation is required for proper incorporation of the C subunit into the ATP synthase complex and mitochondrial respiration.

It is found in the mitochondrion membrane. The catalysed reaction is H(+)(in) = H(+)(out). Functionally, subunit c, of the mitochondrial membrane ATP synthase complex (F(1)F(0) ATP synthase or Complex V) that produces ATP from ADP in the presence of a proton gradient across the membrane which is generated by electron transport complexes of the respiratory chain. ATP synthase complex consist of a soluble F(1) head domain - the catalytic core - and a membrane F(1) domain - the membrane proton channel. These two domains are linked by a central stalk rotating inside the F(1) region and a stationary peripheral stalk. During catalysis, ATP synthesis in the catalytic domain of F(1) is coupled via a rotary mechanism of the central stalk subunits to proton translocation. With the subunit a (MT-ATP6), forms the proton-conducting channel in the F(0) domain, that contains two crucial half-channels (inlet and outlet) that facilitate proton movement from the mitochondrial intermembrane space (IMS) into the matrix. Protons are taken up via the inlet half-channel and released through the outlet half-channel, following a Grotthuss mechanism. The protein is ATP synthase F(0) complex subunit C1, mitochondrial of Ovis aries (Sheep).